A 97-amino-acid polypeptide reads, in one-letter code: Putative pterin-4-alpha-carbinolamine dehydratase (97 aa).

It belongs to the pterin-4-alpha-carbinolamine dehydratase family.

The enzyme catalyses (4aS,6R)-4a-hydroxy-L-erythro-5,6,7,8-tetrahydrobiopterin = (6R)-L-erythro-6,7-dihydrobiopterin + H2O. This chain is Putative pterin-4-alpha-carbinolamine dehydratase, found in Rhizorhabdus wittichii (strain DSM 6014 / CCUG 31198 / JCM 15750 / NBRC 105917 / EY 4224 / RW1) (Sphingomonas wittichii).